The chain runs to 678 residues: Putative cyclic nucleotide-gated ion channel 15 (678 aa).

The Cytoplasmic portion of the chain corresponds to 1 to 81; that stretch reads MGYGNSRSVR…RGQTIRRWNK (81 aa). A helical membrane pass occupies residues 82–102; that stretch reads IFLIACLVSLFVDPLFFFLPV. The Extracellular portion of the chain corresponds to 103–115; it reads MRNEACITIGVRL. The chain crosses the membrane as a helical span at residues 116-136; that stretch reads EVVLTLIRSLADAFYIAQILI. Residues 137-170 are Cytoplasmic-facing; sequence RFRTAYIAPPSRVFGRGELVIDSRKIAWRYLHKS. A helical membrane pass occupies residues 171-191; the sequence is FWIHLVAALPLPQVLIWIIIP. Residues 192 to 203 lie on the Extracellular side of the membrane; that stretch reads NLRGSPMTNTKN. A helical membrane pass occupies residues 204 to 224; sequence VLRFIIIFQYVPRMFLIFPLS. At 225-245 the chain is on the cytoplasmic side; that stretch reads RQIIKATGVVTETAWAGAAYN. Residues 246–266 traverse the membrane as a helical segment; the sequence is LMLYMLASHVLGACWYLLAVE. Residues 267 to 364 are Extracellular-facing; sequence RQEACWRHAC…GQNLATSTYA (98 aa). Residues 365–385 traverse the membrane as a helical segment; it reads GEILFAIIIATLGLVLFALLI. The Cytoplasmic portion of the chain corresponds to 386-678; that stretch reads GNMQTYLQST…KPVEPDFSSE (293 aa). Residues 471 to 595 and glutamate 542 contribute to the a nucleoside 3',5'-cyclic phosphate site; that span reads LFDQ…TKQL. The calmodulin-binding stretch occupies residues 587-602; it reads FRRLHTKQLRHKFRFY. Residues 607-638 enclose the IQ domain; it reads RTWAACFIQAAWRRHRKRKYKTELRAKEEFHY. Polar residues predominate over residues 656-668; sequence RSGSDSGMMSSIQ. The tract at residues 656-678 is disordered; the sequence is RSGSDSGMMSSIQKPVEPDFSSE.

The protein belongs to the cyclic nucleotide-gated cation channel (TC 1.A.1.5) family. In terms of assembly, homotetramer or heterotetramer.

The protein localises to the cell membrane. Functionally, putative cyclic nucleotide-gated ion channel. The protein is Putative cyclic nucleotide-gated ion channel 15 (CNGC15) of Arabidopsis thaliana (Mouse-ear cress).